The sequence spans 245 residues: MAQEEGGSLPEVRARVRAAHGIPDLAQKLHFYDRWAPDYDQDVATLLYRAPRLAVDCLTQALPGPPHSALILDVACGTGLVAAELRAPGFLQLHGVDGSPGMLEQAQAPGLYQRLSLCTLGQEPLPSPEGTFDAVLIVGALSDGQVPCNAIPELHVTKPGGLVCLTTRTNSSNLQYKEALEATLDRLEQAGMWEGLVAWPVDRLWTAGSWLPPSWRWYPASLPRMASSPALSTCTESGRRPRLRK.

This Homo sapiens (Human) protein is Methyltransferase-like protein 27.